The primary structure comprises 373 residues: UDP-glucose 4-epimerase 3 (373 aa).

Residue 27–58 (SVLVTGGAGYIGTHTVLRLLEKGFAVTVVDNF) participates in NAD(+) binding. Residue S153 participates in substrate binding. Y177 functions as the Proton acceptor in the catalytic mechanism.

This sequence belongs to the NAD(P)-dependent epimerase/dehydratase family. The cofactor is NAD(+).

The catalysed reaction is UDP-alpha-D-glucose = UDP-alpha-D-galactose. It functions in the pathway carbohydrate metabolism; galactose metabolism. Its function is as follows. Catalyzes the interconversion between UDP-glucose and UDP-galactose. The protein is UDP-glucose 4-epimerase 3 (UGE-3) of Oryza sativa subsp. japonica (Rice).